We begin with the raw amino-acid sequence, 804 residues long: Phenylalanine--tRNA ligase beta subunit (804 aa).

The region spanning 40 to 153 (PLPDLRVVVG…SSYAVGEPFA (114 aa)) is the tRNA-binding domain. The region spanning 400 to 476 (PALLVLPFRP…RLHGYDNIEA (77 aa)) is the B5 domain. The Mg(2+) site is built by D454, D460, E463, and E464. Positions 710-802 (SKFPAVQRDL…AESKLGAVIR (93 aa)) constitute an FDX-ACB domain.

The protein belongs to the phenylalanyl-tRNA synthetase beta subunit family. Type 1 subfamily. Tetramer of two alpha and two beta subunits. Mg(2+) serves as cofactor.

It localises to the cytoplasm. The catalysed reaction is tRNA(Phe) + L-phenylalanine + ATP = L-phenylalanyl-tRNA(Phe) + AMP + diphosphate + H(+). The protein is Phenylalanine--tRNA ligase beta subunit of Chlorobium luteolum (strain DSM 273 / BCRC 81028 / 2530) (Pelodictyon luteolum).